The following is a 199-amino-acid chain: Recombination protein RecR (199 aa).

The C4-type zinc-finger motif lies at 58–73 (CQRCFHLSSEDLCNIC). Residues 81–175 (QTICVVADPR…RVTRIAFGLP (95 aa)) form the Toprim domain.

The protein belongs to the RecR family.

Functionally, may play a role in DNA repair. It seems to be involved in an RecBC-independent recombinational process of DNA repair. It may act with RecF and RecO. This chain is Recombination protein RecR, found in Synechococcus elongatus (strain ATCC 33912 / PCC 7942 / FACHB-805) (Anacystis nidulans R2).